The chain runs to 295 residues: Host-inducible protein A (295 aa).

A disordered region spans residues 1 to 20; the sequence is MHLDRSDSNGGSSRYTLDHE.

Belongs to the NopP family.

In Rhizobium fredii (Sinorhizobium fredii), this protein is Host-inducible protein A.